A 72-amino-acid chain; its full sequence is UPF0729 protein C18orf32 homolog (72 aa).

The segment at 1–33 (MVCIPCIVIPVLLWIFKKFLEPYIYPVVSRIWP) is necessary for its localzation to the endoplasmic reticulum and lipid droplets. The segment at 45–72 (TGKVDCKGADTNGFSTKGPTEVSDKKKD) is disordered.

It belongs to the UPF0729 family. As to quaternary structure, interacts with DERL1 and AMFR. Undergoes ER-associated degradation (ERAD).

The protein localises to the endoplasmic reticulum. It is found in the lipid droplet. Functionally, may activate the NF-kappa-B signaling pathway. This Rattus norvegicus (Rat) protein is UPF0729 protein C18orf32 homolog.